A 194-amino-acid polypeptide reads, in one-letter code: UPF0301 protein FTH_1193 (194 aa).

It belongs to the UPF0301 (AlgH) family.

The sequence is that of UPF0301 protein FTH_1193 from Francisella tularensis subsp. holarctica (strain OSU18).